The chain runs to 438 residues: Ubiquitin carboxyl-terminal hydrolase 27 (438 aa).

The region spanning 78-421 (RGLINLGNTC…EGYLLFYHKQ (344 aa)) is the USP domain. The Nucleophile role is filled by Cys-87. His-380 serves as the catalytic Proton acceptor.

It belongs to the peptidase C19 family. As to quaternary structure, interacts with phosphorylated BCL2L11 isoform BIMEL; this interaction leads to BCL2L11 deubiquitination and stabilization.

It localises to the cytoplasm. It is found in the cytosol. Its subcellular location is the nucleus. The enzyme catalyses Thiol-dependent hydrolysis of ester, thioester, amide, peptide and isopeptide bonds formed by the C-terminal Gly of ubiquitin (a 76-residue protein attached to proteins as an intracellular targeting signal).. Its function is as follows. Deubiquitinase involved in innate antiviral immunity by mediating deubiquitination of CGAS and RIGI. Negatively regulates RIGI by mediating 'Lys-63'-linked deubiquitination of RIGI, inhibiting type I interferon signaling. Also regulates 'Lys-63'-linked ubiquitination level of MDA5/IFIH1. Acts as a positive regulator of the cGAS-STING pathway by catalyzing 'Lys-48'-linked deubiquitination of CGAS, thereby promoting its stabilization. Can reduce the levels of BCL2L11/BIM ubiquitination and stabilize BCL2L11 in response to the RAF-MAPK-degradation signal. By acting on BCL2L11 levels, may counteract the anti-apoptotic effects of MAPK activity. This is Ubiquitin carboxyl-terminal hydrolase 27 from Mus musculus (Mouse).